Consider the following 203-residue polypeptide: Putative 3-methyladenine DNA glycosylase (203 aa).

This sequence belongs to the DNA glycosylase MPG family.

The polypeptide is Putative 3-methyladenine DNA glycosylase (Clostridium beijerinckii (strain ATCC 51743 / NCIMB 8052) (Clostridium acetobutylicum)).